The following is a 610-amino-acid chain: Protein Smaug homolog 1 (610 aa).

Phosphoserine is present on Ser-67. Disordered regions lie at residues 177–222, 318–366, and 464–487; these read ARGP…EEGS, SSPS…LQPP, and NRGF…GRRN. Residues 222-295 enclose the SAM domain; that stretch reads SGMKDVPAWL…LKSLERDIIE (74 aa). Position 319 is a phosphoserine (Ser-319). Thr-323 carries the post-translational modification Phosphothreonine. Positions 344–358 are enriched in low complexity; sequence SAATVTSATASASAG. At Arg-465 the chain carries Omega-N-methylarginine. Polar residues predominate over residues 467–480; the sequence is FGQSNSLPTASSVG. The residue at position 472 (Ser-472) is a Phosphoserine.

It belongs to the SMAUG family. Expressed in brain (at protein level).

The protein resides in the cytoplasm. Its subcellular location is the cell projection. It is found in the dendrite. It localises to the synapse. The protein localises to the synaptosome. Functionally, acts as a translational repressor of SRE-containing messengers. This is Protein Smaug homolog 1 (Samd4a) from Rattus norvegicus (Rat).